Consider the following 327-residue polypeptide: Serine/threonine-protein phosphatase 4 regulatory subunit ppfr-4 (327 aa).

Positions 141 to 185 (KLAVEEIRRLKLERHKKKQELKMAELRIQKQLEAVSIDEQNLREL) form a coiled coil. Positions 271–327 (KFGHNPQNAPQSSAPAGAEAQESEEEVDDDEARAKAMRWDEYKDDHRRGWGNMHNKG) are disordered. The segment covering 275–284 (NPQNAPQSSA) has biased composition (polar residues). Positions 291–301 (QESEEEVDDDE) are enriched in acidic residues. Residues 302–318 (ARAKAMRWDEYKDDHRR) show a composition bias toward basic and acidic residues.

Serine/threonine-protein phosphatase 4 (PP4) occurs in different assemblies of the catalytic and one or more regulatory subunits. The catalytic subunit is likely to be pph-4.1.

Probable regulatory subunit of serine/threonine-protein phosphatase PP4 which may play a role in meiosis and embryonic mitosis. Probably in association with catalytic subunit pph-4.1, regulates microtubule severing during oocyte meiosis II by dephosphorylating and likely activating mei-1, a component of the katanin microtubule severing complex. The chain is Serine/threonine-protein phosphatase 4 regulatory subunit ppfr-4 from Caenorhabditis elegans.